Consider the following 304-residue polypeptide: Undecaprenyl-diphosphatase (304 aa).

8 consecutive transmembrane segments (helical) span residues 5-25, 47-67, 72-92, 111-131, 137-157, 209-231, 248-268, and 282-302; these read FLFI…EFVP, GFPE…VVVL, ISSS…LKAS, FGIN…LFHD, LFST…LIVI, ISGL…AMVG, TNLI…LVVI, and IFAI…FTKV.

It belongs to the UppP family.

The protein resides in the cell membrane. It catalyses the reaction di-trans,octa-cis-undecaprenyl diphosphate + H2O = di-trans,octa-cis-undecaprenyl phosphate + phosphate + H(+). Functionally, catalyzes the dephosphorylation of undecaprenyl diphosphate (UPP). Confers resistance to bacitracin. This is Undecaprenyl-diphosphatase from Clostridium perfringens (strain SM101 / Type A).